A 556-amino-acid polypeptide reads, in one-letter code: Oxygen-dependent choline dehydrogenase (556 aa).

6–35 (DYIIIGAGSAGNVLAARLTEDPGVTVLLLE) contributes to the FAD binding site. Residue His475 is the Proton acceptor of the active site.

This sequence belongs to the GMC oxidoreductase family. Requires FAD as cofactor.

It catalyses the reaction choline + A = betaine aldehyde + AH2. The enzyme catalyses betaine aldehyde + NAD(+) + H2O = glycine betaine + NADH + 2 H(+). It participates in amine and polyamine biosynthesis; betaine biosynthesis via choline pathway; betaine aldehyde from choline (cytochrome c reductase route): step 1/1. Functionally, involved in the biosynthesis of the osmoprotectant glycine betaine. Catalyzes the oxidation of choline to betaine aldehyde and betaine aldehyde to glycine betaine at the same rate. The sequence is that of Oxygen-dependent choline dehydrogenase from Xanthomonas axonopodis pv. citri (strain 306).